Consider the following 525-residue polypeptide: Beta-galactoside alpha-2,6-sialyltransferase 2 (525 aa).

Over 1-11 (MKPHLKQWRQR) the chain is Cytoplasmic. Residues 12–32 (MLFAIFVWGLLFLAIFIYFTN) form a helical; Signal-anchor for type II membrane protein membrane-spanning segment. At 33–525 (SNPAAPMPSS…PVTRPNNTNT (493 aa)) the chain is on the lumenal side. 2 disordered regions span residues 85-107 (SASP…DGFD) and 145-183 (RQGA…PEEA). 3 cysteine pairs are disulfide-bonded: cysteine 249–cysteine 515, cysteine 292–cysteine 444, and cysteine 462–cysteine 473. N-linked (GlcNAc...) asparagine glycosylation is found at asparagine 303 and asparagine 333. The N-linked (GlcNAc...) asparagine glycan is linked to asparagine 521.

It belongs to the glycosyltransferase 29 family.

The protein localises to the golgi apparatus. It is found in the golgi stack membrane. It carries out the reaction a beta-D-galactoside + CMP-N-acetyl-beta-neuraminate = an N-acetyl-alpha-neuraminyl-(2-&gt;6)-beta-D-galactosyl derivative + CMP + H(+). Its function is as follows. Transfers sialic acid from the donor of substrate CMP-sialic acid to galactose containing acceptor substrates. Has alpha-2,6-sialyltransferase activity toward oligosaccharides that have the Gal-beta-1,4-GlcNAc sequence at the non-reducing end of their carbohydrate groups, but it has weak or no activities toward glycoproteins and glycolipids. The protein is Beta-galactoside alpha-2,6-sialyltransferase 2 (St6gal2) of Rattus norvegicus (Rat).